The primary structure comprises 479 residues: Putative L-cysteine desulfhydrase 2 (479 aa).

Residues 1–36 (MASLQSGGDAAANGVDADVDGAASPPSAKRPRAGAG) form a disordered region. Over residues 7-36 (GGDAAANGVDADVDGAASPPSAKRPRAGAG) the composition is skewed to low complexity. Residue Lys-270 is modified to N6-(pyridoxal phosphate)lysine.

The protein belongs to the class-V pyridoxal-phosphate-dependent aminotransferase family. The cofactor is pyridoxal 5'-phosphate.

The catalysed reaction is L-cysteine + H2O = hydrogen sulfide + pyruvate + NH4(+) + H(+). In terms of biological role, catalyzes the production of hydrogen sulfide (H2S) from cysteine. The polypeptide is Putative L-cysteine desulfhydrase 2 (Oryza sativa subsp. japonica (Rice)).